A 908-amino-acid polypeptide reads, in one-letter code: Oxysterol-binding protein 2 (908 aa).

The tract at residues 42-112 is disordered; the sequence is SAFGSGPASK…GLWPGSENGT (71 aa). The span at 81–90 shows a compositional bias: polar residues; it reads EPGSQTTSVP. The PH domain occupies 179–271; sequence LDSYKGWLLK…WITALELAKA (93 aa). Disordered stretches follow at residues 279-299, 413-445, and 822-843; these read TQSD…DNSE, RAFC…SEED, and LMER…EKQR. Residue serine 284 is modified to Phosphoserine. Positions 424–437 are enriched in low complexity; it reads SSSKSFSEGSFLTS.

It belongs to the OSBP family. Interacts with CCDC159. Expressed in the testis (at protein level). Expressed in postmeiotic germ cells of the testis.

Its subcellular location is the membrane. The protein resides in the cytoplasmic vesicle. The protein localises to the secretory vesicle. It is found in the acrosome. Functionally, binds 7-ketocholesterol. Acts during spermatid development where its function is required prior to the removal of cytoplasm from the sperm head. This is Oxysterol-binding protein 2 (Osbp2) from Mus musculus (Mouse).